The chain runs to 238 residues: N-terminal acetyltransferase A complex catalytic subunit ARD1 (238 aa).

Residues 35-195 (YHILSWPEAS…DAYAMKKVLK (161 aa)) enclose the N-acetyltransferase domain.

This sequence belongs to the acetyltransferase family. ARD1 subfamily. In terms of assembly, component of the N-terminal acetyltransferase A (NatA) complex, which is composed of ARD1, NAT1 and NAT5. Can self-associate.

The protein resides in the cytoplasm. The catalysed reaction is N-terminal glycyl-[protein] + acetyl-CoA = N-terminal N(alpha)-acetylglycyl-[protein] + CoA + H(+). It carries out the reaction N-terminal L-alanyl-[protein] + acetyl-CoA = N-terminal N(alpha)-acetyl-L-alanyl-[protein] + CoA + H(+). It catalyses the reaction N-terminal L-seryl-[protein] + acetyl-CoA = N-terminal N(alpha)-acetyl-L-seryl-[protein] + CoA + H(+). The enzyme catalyses N-terminal L-valyl-[protein] + acetyl-CoA = N-terminal N(alpha)-acetyl-L-valyl-[protein] + CoA + H(+). The catalysed reaction is N-terminal L-cysteinyl-[protein] + acetyl-CoA = N-terminal N(alpha)-acetyl-L-cysteinyl-[protein] + CoA + H(+). It carries out the reaction N-terminal L-threonyl-[protein] + acetyl-CoA = N-terminal N(alpha)-acetyl-L-threonyl-[protein] + CoA + H(+). In terms of biological role, catalytic component of the NatA N-terminal acetyltransferase, which catalyzes acetylation of proteins beginning with Met-Ser, Met-Gly and Met-Ala. N-acetylation plays a role in normal eukaryotic translation and processing, protect against proteolytic degradation and protein turnover. The chain is N-terminal acetyltransferase A complex catalytic subunit ARD1 (ARD1) from Saccharomyces cerevisiae (strain ATCC 204508 / S288c) (Baker's yeast).